Reading from the N-terminus, the 499-residue chain is Apolipoprotein N-acyltransferase (499 aa).

6 helical membrane passes run 18-38 (FSPY…LIIT), 50-70 (LGFL…YISI), 82-102 (IIII…FVIL), 105-125 (FFFP…AWMI), 156-176 (PIIG…MCVL), and 182-202 (SYYP…LNFF). The CN hydrolase domain maps to 217-461 (IQGNISQHTY…NDFLLEEVFS (245 aa)). Glu257 functions as the Proton acceptor in the catalytic mechanism. Lys320 is a catalytic residue. The active-site Nucleophile is the Cys372. Residues 476–496 (LLFFSIICFIISFFIKIKLIF) traverse the membrane as a helical segment.

The protein belongs to the CN hydrolase family. Apolipoprotein N-acyltransferase subfamily.

The protein resides in the cell membrane. The catalysed reaction is N-terminal S-1,2-diacyl-sn-glyceryl-L-cysteinyl-[lipoprotein] + a glycerophospholipid = N-acyl-S-1,2-diacyl-sn-glyceryl-L-cysteinyl-[lipoprotein] + a 2-acyl-sn-glycero-3-phospholipid + H(+). The protein operates within protein modification; lipoprotein biosynthesis (N-acyl transfer). Catalyzes the phospholipid dependent N-acylation of the N-terminal cysteine of apolipoprotein, the last step in lipoprotein maturation. This chain is Apolipoprotein N-acyltransferase, found in Wigglesworthia glossinidia brevipalpis.